Consider the following 439-residue polypeptide: 23S rRNA (uracil(1939)-C(5))-methyltransferase RlmD (439 aa).

The 60-residue stretch at 10–69 folds into the TRAM domain; it reads KTQLNTRHQAVQVERLDHHGAGIAYLKKKPLFIDGALPGEEVVTQLVEEKSKFARGKLIK. [4Fe-4S] cluster-binding residues include Cys82, Cys88, Cys91, and Cys169. Residues Gln272, Phe301, Asn306, Glu322, Asn349, and Asp370 each contribute to the S-adenosyl-L-methionine site. Catalysis depends on Cys396, which acts as the Nucleophile.

The protein belongs to the class I-like SAM-binding methyltransferase superfamily. RNA M5U methyltransferase family. RlmD subfamily.

It carries out the reaction uridine(1939) in 23S rRNA + S-adenosyl-L-methionine = 5-methyluridine(1939) in 23S rRNA + S-adenosyl-L-homocysteine + H(+). Its function is as follows. Catalyzes the formation of 5-methyl-uridine at position 1939 (m5U1939) in 23S rRNA. This Vibrio campbellii (strain ATCC BAA-1116) protein is 23S rRNA (uracil(1939)-C(5))-methyltransferase RlmD.